Consider the following 433-residue polypeptide: Enolase (433 aa).

Glutamine 164 lines the (2R)-2-phosphoglycerate pocket. Glutamate 206 serves as the catalytic Proton donor. Mg(2+) is bound by residues aspartate 243, glutamate 289, and aspartate 316. The (2R)-2-phosphoglycerate site is built by lysine 341, arginine 370, serine 371, and lysine 392. Residue lysine 341 is the Proton acceptor of the active site.

Belongs to the enolase family. Mg(2+) serves as cofactor.

It is found in the cytoplasm. Its subcellular location is the secreted. The protein resides in the cell surface. The enzyme catalyses (2R)-2-phosphoglycerate = phosphoenolpyruvate + H2O. It participates in carbohydrate degradation; glycolysis; pyruvate from D-glyceraldehyde 3-phosphate: step 4/5. Its function is as follows. Catalyzes the reversible conversion of 2-phosphoglycerate (2-PG) into phosphoenolpyruvate (PEP). It is essential for the degradation of carbohydrates via glycolysis. The chain is Enolase from Borrelia hermsii (strain HS1 / DAH).